The primary structure comprises 2962 residues: MSDESELGNQSEMESFNESDSPDEADPDVVIIHDIVHLRASTTGDYSQSEIGKLPEQNTFFLPGRVKRNISSNDSDVIIDEDEIPDGAIRITSDTHFIGSSRGTSELGDFEMDEQEFLNITIEENGNEQELEEHLRNAYRHEEEECFEEEDDIIELPPLPVKPAVKKPRRKLPKHLSIESGSTAKTSKLVAEVVHDHPRPVNYRMKPAVTDDGKVVEQKRTRVTRNIMSHTIPQYHLEGEETEFGRVKESTLSKTIEQYLQAGKLVSPKCDQFREQIVATAVEYDGSVKMLQFENALKKHSGKQKRLKYQTGWWKASKSHYERAVNGYVAMPKTPVLSISDDPVLYKHHSLFPKNQSSELEKINVQLRIRLNSKRQNNDVIPDSSYFVREFLMQKHSISLRMNRSSDLPELFVPPTLECGYFPQDAVTVQQQEHYLMMRFEEAQDEYHNITYRSIAPPVEFQVGTISAKELHKFHRIGRHIHGFFVVWENKFPEYDESGICCPRKRYLVDMFNLICFPLYTEYEQWESRLRVAFDKTIVYNLHLSEILRCNRPVFDFLSKNKSMLQPITLKEIVYLIEQSNMDAKSFAVKFGLRTFYDHGRATSNKDYLSAFLIITGGAKVVTEEIDSERLRVFNSDYMESGVLTSSGDVYTFEFDKIPNNYQISIGCNADGVAEMEQEDVRHELSECSSRITRIIGDSKKPEKIIARPLVKTNQNDGMKFFTRKDLLNYRIKLYDPSYVVPRAKKQIVNEPAKKKPGRKSKTRYDAAMQQNNFEIEGVPSDVDSEFEGYLSDSENVFQKPSKLMRSTSSDSVFIDYQYREKMFLDVSWFHQQKMIDRSLPPLKKRKRKMNRIYHKHSVRYTMLQANGCAFTEMYRCYDKILPCGTKEIARTKNAIRFPHRFRTYNIPQVYGPGDKQLITEVFGVVKDVITRATGFESASIRTANDIAQAVYDANIARRELLENLEPSDNGILPSPAYLAIEMLSHQKMSGRLCLESARKDVQNNVDKMYNDYMDLDPLDKELHFEISQSIRQSKLNESLEEYERNRERQLAKTLKTVPMDKRSQAALARREEKRRESRRKLADKYAEQRRMMASTRRLEKRTTQKQVDPETIQRLRREDEVRKRKRFEEEDRRGMIRRREERVALQEKVDRMLEEGLRLEKVREAERIRQQQEEERIEMETILISRRVREEEEEKMRLERLRKAEREREQERLKREEEEERKRLEQLREAEKLKAEIEKENERKLQEERTRKALELERKIEEIKRVSTLKDMFGPLPIAKENEQTEKDFQILLDDHELTLLTISRDPLNEKYQEARTEFERLDIKSMLLRKAEKLIDVLTIHYDVPIEQTCRYFTSSIESNENRMAVNEQLNKLFENMANCFTFNIQDGENGLQSKRKWDFQFKKCAVFDGVSQSTVNFIEEKMRENTKKKHLATPKTVISIDTSLLKQSLLRSHARFDPDISLYAQNHTANSIGDVTLKMSNYSLDFATQSIHDKELAEKATPKKGPTVRRHIKNLFGSEKVIVRRSLAAGKPASLNSEDSDSEDSREGSPVAEFLPTNPVCSFWKLVVKIENSTTDKEKTELCEDLDKLILRKDDLFSKSLKWMFPLLATFYVLLSNAVLNENEEIISDKNQTGVTKDEILKSTINDLMIIAAYFEEGSRERSNLRKMISMNGFSVVFNRVILFAKKTCTLAKELESNSRSLSGYVIEDLFESLLAEIERTMRQELGSSVRKTGKLERDFEEIVKLIQNEKKLALSHKSHKNDENRRFRLNTVVKWYDAIICHCKEELTQAIVDAFPLNAITKNKETSHVAMENGDDEAMLSDTSDNQMSTTDYQMPKNICRNSEIFPEDAFAKAYAVVRIPSKKERAQMLSVYRKKNAQSGCVENKGLSRMPKFEEPFVDSVWRTIEKRINNMTHSEEKQIKRFIPVSRSHKLNEKVKFYAMVMIQERDSRDTRLFNSKFQDDNLWHCYSKSSLNHEKMESRILQHIEHTVLSKSNFNQMKWSVQCVNGNKKDAIHYFTDLYKYRSESEFRSALSCGKLKFNFKVYTHLWFMGNLLPTSYNPDSHDDKLFVPCSGCTSGDVIIIHKCTCAYHNDTFSDKFIYANTSLPVGIDKVTRLVGRFVCEHGPSSFLILEHCSANVDANIPFESENVEFSAELRIVKRKTMHSQLVKTFAEEHTHLRDASRHRAISTVTLDSSGSGRSTRCEIFEDSPSEDENDENQLDTTRIGRKIDPIIVDSDKAYLIAEGERMALRIKRLLDPELQKFRSKNFVSRSKSVDAPKTSKQKTVIRRSQSVCDLNDVNEYAQKKVRNTKDSFATLFRDHEYSTRRTYEEQLNNELLDVVTTFGGASNVSADKKYNILASILAFEKEVQLVNDKNGELFKTVSNLVQRNSLQHVKGVILAEDNQTLRSTDNTSEVFPESKAVNEYLKFEIYKRKMMVNAKLMADTVKDLKLKHAEYRPFAKLIATYDSIFKFNVYLFEHFLNCISKHVFNPYAIYCEETRPTGTELSKFQLTLKLIETSMPTVLSMLFNTEPLRRQLSELSEIHKKVRSEDLACTIASLCRYAIERIRIPQTADKRLCDFSWLNSAEDHRETVSFIRLTLEHTLPDMKTENEQTRFVEFLKEAEGFHFSYKFVEAQCKTFVRNHGDSKQAFFTAFYNQNEAFYGSLQKFMSNGTIDPKMKLYYQHQAFLRLHNIVKKRSHIITSDDYHRSSDVCKAMLLSEIVSNPKIAQEAYISGSVLDRMYTSLCKIKAKMPLISPSYIGTSLTCFEDELLFSAVREAKVHTDTRVVFRSKSCMRPNEKAGDANFKTCKVTLLVNLETALLSMVFKSRDQSEIDKDDRLDIDILDEEVIKPIIDWNRIFETFIQPTYNTLFSRMEKRERVSILPENPLGRLENYAFTNPNQDKDCQAVLEYIDVASDTDAEESIEDPLDIVEMTLKRALPRSMSPSSKRRRMR.

Disordered stretches follow at residues 1–28 and 1061–1110; these read MSDESELGNQSEMESFNESDSPDEADPD and DKRS…QVDP. Residues 15–27 are compositionally biased toward acidic residues; it reads SFNESDSPDEADP. Coiled-coil stretches lie at residues 995–1085 and 1140–1268; these read LESA…LADK and REER…KRVS. Disordered regions lie at residues 1535 to 1554 and 2198 to 2227; these read PASLNSEDSDSEDSREGSPV and LDSSGSGRSTRCEIFEDSPSEDENDENQLD. Residues 2212-2225 show a composition bias toward acidic residues; it reads FEDSPSEDENDENQ.

In terms of assembly, component of the SDC complex, which consists of sdc-1, sdc-2 and sdc-3. Within the complex, interacts with sdc-1 and sdc-3. In terms of tissue distribution, expressed in hermaphrodites (XX), but absent in males (XO) (at protein level).

It localises to the chromosome. In terms of biological role, component of the SDC complex that functions in sex determination and in X chromosome dosage compensation specifically in hermaphrodite (XX) animals. Required for the recruitment of the condensin I-like dosage compensation complex to the male sex-determining autosomal gene her-1, thereby contributing to its repression and initiating hermaphrodite sexual development. Plays a central role in X-chromosome recognition and in the recruitment and assembly of the dosage compensation complex and the dosage compensation protein dpy-21 onto the X chromosomes in hermaphrodites, which leads to a reduction of X-linked gene transcription and an equalization of X-linked gene expression between the sexes. May confer protection against toxicity induced by heavy metals such as arsenite. The chain is Sex determination and dosage compensation protein sdc-2 from Caenorhabditis elegans.